We begin with the raw amino-acid sequence, 826 residues long: Lon protease (826 aa).

Residues 26 to 221 (LPMLPVRDVV…AVNGFVSREV (196 aa)) form the Lon N-terminal domain. 373 to 380 (GPPGVGKT) provides a ligand contact to ATP. A Lon proteolytic domain is found at 609 to 790 (EPQIGLATGL…NEVLEKALLP (182 aa)). Residues Ser-696 and Lys-739 contribute to the active site. The interval 788–826 (LLPAEKKKAPPKKKPPKKAAKPKAKKTQPKAKTTEAADK) is disordered. Over residues 796 to 816 (APPKKKPPKKAAKPKAKKTQP) the composition is skewed to basic residues.

The protein belongs to the peptidase S16 family. As to quaternary structure, homohexamer. Organized in a ring with a central cavity.

It is found in the cytoplasm. It carries out the reaction Hydrolysis of proteins in presence of ATP.. Functionally, ATP-dependent serine protease that mediates the selective degradation of mutant and abnormal proteins as well as certain short-lived regulatory proteins. Required for cellular homeostasis and for survival from DNA damage and developmental changes induced by stress. Degrades polypeptides processively to yield small peptide fragments that are 5 to 10 amino acids long. Binds to DNA in a double-stranded, site-specific manner. In Desulfatibacillum aliphaticivorans, this protein is Lon protease.